The sequence spans 319 residues: Putative metal ion transporter YfjQ (319 aa).

Transmembrane regions (helical) follow at residues 254 to 274 and 290 to 310; these read IMMT…IAGV and GYFA…IWFV.

This sequence belongs to the CorA metal ion transporter (MIT) (TC 1.A.35) family.

It is found in the cell membrane. This Bacillus subtilis (strain 168) protein is Putative metal ion transporter YfjQ (yfjQ).